A 192-amino-acid polypeptide reads, in one-letter code: Casparian strip membrane protein 2 (192 aa).

The Cytoplasmic segment spans residues 1–31 (MTKDVVVEHGESSKAPLVAAPAASGVGRAAS). Residues 32–52 (VADVFLRFLAIVGTIASAISM) form a helical membrane-spanning segment. Over 53–79 (GTTNETLPFFTQFIQFEAKYSDLPSFT) the chain is Extracellular. Asparagine 56 is a glycosylation site (N-linked (GlcNAc...) asparagine). Residues 80–100 (FFVAANAVVCTYLVLSIPLSI) form a helical membrane-spanning segment. Residues 101 to 112 (VHIVRPRARYSR) are Cytoplasmic-facing. A helical transmembrane segment spans residues 113–133 (LVLVFFDAAMLTLLTAGASAA). Over 134–166 (AAIVYLAHKGNVRANWFAICQQFDSFCERISGS) the chain is Extracellular. A helical transmembrane segment spans residues 167 to 187 (LIGSFAAMVLLIMLIFLSAFA). Residues 188 to 192 (LARRH) are Cytoplasmic-facing.

Belongs to the Casparian strip membrane proteins (CASP) family. As to quaternary structure, homodimer and heterodimers.

The protein localises to the cell membrane. Regulates membrane-cell wall junctions and localized cell wall deposition. Required for establishment of the Casparian strip membrane domain (CSD) and the subsequent formation of Casparian strips, a cell wall modification of the root endodermis that determines an apoplastic barrier between the intraorganismal apoplasm and the extraorganismal apoplasm and prevents lateral diffusion. This chain is Casparian strip membrane protein 2, found in Panicum virgatum (Blackwell switchgrass).